A 281-amino-acid chain; its full sequence is N-acetylmuramic acid 6-phosphate etherase (281 aa).

One can recognise an SIS domain in the interval 63–226 (IVPRMKQGGR…TTSVMIQLGR (164 aa)). The active-site Proton donor is Glu-91. Residue Glu-122 is part of the active site.

This sequence belongs to the GCKR-like family. MurNAc-6-P etherase subfamily. In terms of assembly, homodimer.

It catalyses the reaction N-acetyl-D-muramate 6-phosphate + H2O = N-acetyl-D-glucosamine 6-phosphate + (R)-lactate. Its pathway is amino-sugar metabolism; N-acetylmuramate degradation. Specifically catalyzes the cleavage of the D-lactyl ether substituent of MurNAc 6-phosphate, producing GlcNAc 6-phosphate and D-lactate. This is N-acetylmuramic acid 6-phosphate etherase from Bacteroides fragilis (strain ATCC 25285 / DSM 2151 / CCUG 4856 / JCM 11019 / LMG 10263 / NCTC 9343 / Onslow / VPI 2553 / EN-2).